Reading from the N-terminus, the 113-residue chain is Large ribosomal subunit protein uL24 (113 aa).

This sequence belongs to the universal ribosomal protein uL24 family. Part of the 50S ribosomal subunit.

Its function is as follows. One of two assembly initiator proteins, it binds directly to the 5'-end of the 23S rRNA, where it nucleates assembly of the 50S subunit. One of the proteins that surrounds the polypeptide exit tunnel on the outside of the subunit. The chain is Large ribosomal subunit protein uL24 from Micrococcus luteus (strain ATCC 4698 / DSM 20030 / JCM 1464 / CCM 169 / CCUG 5858 / IAM 1056 / NBRC 3333 / NCIMB 9278 / NCTC 2665 / VKM Ac-2230) (Micrococcus lysodeikticus).